Reading from the N-terminus, the 99-residue chain is Large ribosomal subunit protein uL23 (99 aa).

This sequence belongs to the universal ribosomal protein uL23 family. As to quaternary structure, part of the 50S ribosomal subunit. Contacts protein L29, and trigger factor when it is bound to the ribosome.

In terms of biological role, one of the early assembly proteins it binds 23S rRNA. One of the proteins that surrounds the polypeptide exit tunnel on the outside of the ribosome. Forms the main docking site for trigger factor binding to the ribosome. The polypeptide is Large ribosomal subunit protein uL23 (Rhodopseudomonas palustris (strain BisB18)).